The sequence spans 244 residues: Methylthioribulose-1-phosphate dehydratase (244 aa).

A substrate-binding site is contributed by Cys-89. 2 residues coordinate Zn(2+): His-107 and His-109. Glu-130 serves as the catalytic Proton donor/acceptor. Zn(2+) is bound at residue His-192.

Belongs to the aldolase class II family. MtnB subfamily. Zn(2+) serves as cofactor.

The protein resides in the cytoplasm. The catalysed reaction is 5-(methylsulfanyl)-D-ribulose 1-phosphate = 5-methylsulfanyl-2,3-dioxopentyl phosphate + H2O. It functions in the pathway amino-acid biosynthesis; L-methionine biosynthesis via salvage pathway; L-methionine from S-methyl-5-thio-alpha-D-ribose 1-phosphate: step 2/6. Its function is as follows. Catalyzes the dehydration of methylthioribulose-1-phosphate (MTRu-1-P) into 2,3-diketo-5-methylthiopentyl-1-phosphate (DK-MTP-1-P). The sequence is that of Methylthioribulose-1-phosphate dehydratase from Saccharomyces cerevisiae (strain ATCC 204508 / S288c) (Baker's yeast).